A 93-amino-acid polypeptide reads, in one-letter code: Small ribosomal subunit protein uS19 (93 aa).

This sequence belongs to the universal ribosomal protein uS19 family.

Functionally, protein S19 forms a complex with S13 that binds strongly to the 16S ribosomal RNA. The polypeptide is Small ribosomal subunit protein uS19 (Synechococcus sp. (strain JA-3-3Ab) (Cyanobacteria bacterium Yellowstone A-Prime)).